We begin with the raw amino-acid sequence, 186 residues long: dCTP deaminase (186 aa).

Residue 107-112 (KSTYAR) coordinates dCTP. Residue Glu-133 is the Proton donor/acceptor of the active site. The dCTP site is built by Gln-152, Tyr-166, and Gln-176.

Belongs to the dCTP deaminase family. As to quaternary structure, homotrimer.

The enzyme catalyses dCTP + H2O + H(+) = dUTP + NH4(+). Its pathway is pyrimidine metabolism; dUMP biosynthesis; dUMP from dCTP (dUTP route): step 1/2. In terms of biological role, catalyzes the deamination of dCTP to dUTP. This is dCTP deaminase from Campylobacter lari (strain RM2100 / D67 / ATCC BAA-1060).